The primary structure comprises 793 residues: Coiled-coil domain-containing protein 175 (793 aa).

Coiled coils occupy residues 131–163 (EINTIKMRITRTENEIELLKKKITDLTKYNEAL), 205–377 (KRED…VLSE), 431–535 (KTVY…MLMK), 562–679 (LPQL…KYRE), and 716–745 (LVDNGEETLQDINNLTDKLRERDEKMQHVS).

The chain is Coiled-coil domain-containing protein 175 (CCDC175) from Homo sapiens (Human).